Reading from the N-terminus, the 338-residue chain is tRNA-specific 2-thiouridylase MnmA (338 aa).

ATP is bound by residues 6–13 (LMSGGIDS) and Met-32. Cys-87 serves as the catalytic Nucleophile. Cys-87 and Cys-185 are oxidised to a cystine. Gly-111 lines the ATP pocket. Residues 135-137 (KDQ) are interaction with tRNA. Cys-185 (cysteine persulfide intermediate) is an active-site residue. Residues 288–289 (RY) form an interaction with tRNA region.

Belongs to the MnmA/TRMU family.

It localises to the cytoplasm. It catalyses the reaction S-sulfanyl-L-cysteinyl-[protein] + uridine(34) in tRNA + AH2 + ATP = 2-thiouridine(34) in tRNA + L-cysteinyl-[protein] + A + AMP + diphosphate + H(+). Its function is as follows. Catalyzes the 2-thiolation of uridine at the wobble position (U34) of tRNA, leading to the formation of s(2)U34. This chain is tRNA-specific 2-thiouridylase MnmA, found in Syntrophomonas wolfei subsp. wolfei (strain DSM 2245B / Goettingen).